Consider the following 649-residue polypeptide: Threonine--tRNA ligase (649 aa).

Residues 1 to 63 (MSSIKITFPD…KEDGSIEIIT (63 aa)) enclose the TGS domain. Residues 245–543 (DHRVIGNELD…LTEMYKGAFP (299 aa)) are catalytic. Zn(2+) is bound by residues Cys-339, His-390, and His-520.

It belongs to the class-II aminoacyl-tRNA synthetase family. Homodimer. Requires Zn(2+) as cofactor.

The protein localises to the cytoplasm. The enzyme catalyses tRNA(Thr) + L-threonine + ATP = L-threonyl-tRNA(Thr) + AMP + diphosphate + H(+). Its function is as follows. Catalyzes the attachment of threonine to tRNA(Thr) in a two-step reaction: L-threonine is first activated by ATP to form Thr-AMP and then transferred to the acceptor end of tRNA(Thr). Also edits incorrectly charged L-seryl-tRNA(Thr). This Ligilactobacillus salivarius (strain UCC118) (Lactobacillus salivarius) protein is Threonine--tRNA ligase.